Consider the following 556-residue polypeptide: Formate--tetrahydrofolate ligase (556 aa).

Position 65 to 72 (65 to 72) interacts with ATP; it reads TPAGEGKT.

Belongs to the formate--tetrahydrofolate ligase family.

The catalysed reaction is (6S)-5,6,7,8-tetrahydrofolate + formate + ATP = (6R)-10-formyltetrahydrofolate + ADP + phosphate. The protein operates within one-carbon metabolism; tetrahydrofolate interconversion. This is Formate--tetrahydrofolate ligase from Acetivibrio thermocellus (strain ATCC 27405 / DSM 1237 / JCM 9322 / NBRC 103400 / NCIMB 10682 / NRRL B-4536 / VPI 7372) (Clostridium thermocellum).